The sequence spans 146 residues: 3-hydroxyacyl-[acyl-carrier-protein] dehydratase FabZ (146 aa).

The active site involves His-49.

It belongs to the thioester dehydratase family. FabZ subfamily.

The protein resides in the cytoplasm. The enzyme catalyses a (3R)-hydroxyacyl-[ACP] = a (2E)-enoyl-[ACP] + H2O. Its function is as follows. Involved in unsaturated fatty acids biosynthesis. Catalyzes the dehydration of short chain beta-hydroxyacyl-ACPs and long chain saturated and unsaturated beta-hydroxyacyl-ACPs. The sequence is that of 3-hydroxyacyl-[acyl-carrier-protein] dehydratase FabZ from Wolbachia sp. subsp. Brugia malayi (strain TRS).